The chain runs to 192 residues: Flavin prenyltransferase UbiX (192 aa).

FMN is bound by residues Gly-10–Ser-12, Ser-36, Ser-92–Thr-95, and Arg-127. Residues Tyr-157 and Lys-173 each coordinate dimethylallyl phosphate.

Belongs to the UbiX/PAD1 family.

It carries out the reaction dimethylallyl phosphate + FMNH2 = prenylated FMNH2 + phosphate. Flavin prenyltransferase that catalyzes the synthesis of the prenylated FMN cofactor (prenyl-FMN) for 4-hydroxy-3-polyprenylbenzoic acid decarboxylase UbiD. The prenyltransferase is metal-independent and links a dimethylallyl moiety from dimethylallyl monophosphate (DMAP) to the flavin N5 and C6 atoms of FMN. This is Flavin prenyltransferase UbiX from Chlamydia trachomatis serovar D (strain ATCC VR-885 / DSM 19411 / UW-3/Cx).